A 185-amino-acid chain; its full sequence is Ribosome-recycling factor (185 aa).

Belongs to the RRF family.

It is found in the cytoplasm. Functionally, responsible for the release of ribosomes from messenger RNA at the termination of protein biosynthesis. May increase the efficiency of translation by recycling ribosomes from one round of translation to another. This Pseudomonas savastanoi pv. phaseolicola (strain 1448A / Race 6) (Pseudomonas syringae pv. phaseolicola (strain 1448A / Race 6)) protein is Ribosome-recycling factor.